The primary structure comprises 447 residues: Cytochrome P450 BJ-4 homolog (447 aa).

Cysteine 392 contributes to the heme binding site.

The protein belongs to the cytochrome P450 family. Heme is required as a cofactor.

Functionally, cytochromes P450 are a group of heme-thiolate monooxygenases. They oxidize a variety of structurally unrelated compounds, including steroids, fatty acids, and xenobiotics. In Sinorhizobium fredii (strain NBRC 101917 / NGR234), this protein is Cytochrome P450 BJ-4 homolog (cyp117A2).